Here is a 379-residue protein sequence, read N- to C-terminus: Tryptophan 2,3-dioxygenase (379 aa).

Substrate-binding positions include Phe-57–His-61 and Arg-128. Position 312 (His-312) interacts with heme. Thr-327 is a substrate binding site.

It belongs to the tryptophan 2,3-dioxygenase family. Homotetramer. Dimer of dimers. The cofactor is heme.

The enzyme catalyses L-tryptophan + O2 = N-formyl-L-kynurenine. Its pathway is amino-acid degradation; L-tryptophan degradation via kynurenine pathway; L-kynurenine from L-tryptophan: step 1/2. It functions in the pathway pigment biosynthesis; ommochrome biosynthesis. In terms of biological role, heme-dependent dioxygenase that catalyzes the oxidative cleavage of the L-tryptophan (L-Trp) pyrrole ring and converts L-tryptophan to N-formyl-L-kynurenine. Catalyzes the oxidative cleavage of the indole moiety. The protein is Tryptophan 2,3-dioxygenase of Drosophila yakuba (Fruit fly).